The primary structure comprises 164 residues: Superoxide dismutase [Cu-Zn] 3 (164 aa).

Cu cation-binding residues include histidine 51, histidine 53, and histidine 68. The cysteines at positions 62 and 151 are disulfide-linked. Residues histidine 68, histidine 76, histidine 85, and aspartate 88 each coordinate Zn(2+). Residue histidine 125 coordinates Cu cation. Residues 162 to 164 carry the Peroxisome localization signal motif; it reads AKL.

This sequence belongs to the Cu-Zn superoxide dismutase family. Homodimer. Cu cation is required as a cofactor. It depends on Zn(2+) as a cofactor. In terms of tissue distribution, expressed in leaves (at protein level).

Its subcellular location is the peroxisome. It carries out the reaction 2 superoxide + 2 H(+) = H2O2 + O2. Destroys radicals which are normally produced within the cells and which are toxic to biological systems. The protein is Superoxide dismutase [Cu-Zn] 3 (CSD3) of Arabidopsis thaliana (Mouse-ear cress).